We begin with the raw amino-acid sequence, 694 residues long: Elongation factor G (694 aa).

A tr-type G domain is found at 8–287; that stretch reads EDYRNFGIMA…AVVEFLPAPT (280 aa). GTP-binding positions include 17–24, 86–90, and 140–143; these read AHIDAGKT, DTPGH, and NKMD.

Belongs to the TRAFAC class translation factor GTPase superfamily. Classic translation factor GTPase family. EF-G/EF-2 subfamily.

Its subcellular location is the cytoplasm. Its function is as follows. Catalyzes the GTP-dependent ribosomal translocation step during translation elongation. During this step, the ribosome changes from the pre-translocational (PRE) to the post-translocational (POST) state as the newly formed A-site-bound peptidyl-tRNA and P-site-bound deacylated tRNA move to the P and E sites, respectively. Catalyzes the coordinated movement of the two tRNA molecules, the mRNA and conformational changes in the ribosome. The protein is Elongation factor G of Brucella canis (strain ATCC 23365 / NCTC 10854 / RM-666).